Here is an 86-residue protein sequence, read N- to C-terminus: Cell division topological specificity factor (86 aa).

This sequence belongs to the MinE family.

In terms of biological role, prevents the cell division inhibition by proteins MinC and MinD at internal division sites while permitting inhibition at polar sites. This ensures cell division at the proper site by restricting the formation of a division septum at the midpoint of the long axis of the cell. This chain is Cell division topological specificity factor, found in Stenotrophomonas maltophilia (strain R551-3).